Here is a 66-residue protein sequence, read N- to C-terminus: Large ribosomal subunit protein bL33c (66 aa).

It belongs to the bacterial ribosomal protein bL33 family.

Its subcellular location is the plastid. It is found in the chloroplast. In Calycanthus floridus var. glaucus (Eastern sweetshrub), this protein is Large ribosomal subunit protein bL33c.